A 563-amino-acid chain; its full sequence is Putative inactive polypeptide N-acetylgalactosaminyltransferase 12 (563 aa).

Residues 1–6 (MEVFAS) lie on the Cytoplasmic side of the membrane. Residues 7-29 (VLNCCFKYIVLPVWIFIVLLLLH) form a helical; Signal-anchor for type II membrane protein membrane-spanning segment. Over 30 to 563 (RDLSSWDGLM…SVMQSANILV (534 aa)) the chain is Lumenal. An N-linked (GlcNAc...) asparagine glycan is attached at asparagine 50. Cysteine 97 and cysteine 334 are oxidised to a cystine. Residues 109-225 (MKPASIIMIF…NGWLSPLLDT (117 aa)) are catalytic subdomain A. The catalytic subdomain B stretch occupies residues 280-342 (PYEVAAVRTS…PCSRVGHLQP (63 aa)). 2 N-linked (GlcNAc...) asparagine glycosylation sites follow: asparagine 389 and asparagine 428. Residues 433-549 (ASGHVKTLEF…ANGKQRWILD (117 aa)) form the Ricin B-type lectin domain. A disulfide bridge connects residues cysteine 446 and cysteine 461. N-linked (GlcNAc...) asparagine glycans are attached at residues asparagine 464 and asparagine 469. Disulfide bonds link cysteine 485–cysteine 499 and cysteine 523–cysteine 537. A glycan (N-linked (GlcNAc...) asparagine) is linked at asparagine 552.

Belongs to the glycosyltransferase 2 family. GalNAc-T subfamily.

It localises to the golgi apparatus membrane. Probable inactive glycosyltransferase. The sequence is that of Putative inactive polypeptide N-acetylgalactosaminyltransferase 12 (pgant12) from Drosophila melanogaster (Fruit fly).